A 582-amino-acid chain; its full sequence is tRNA(Ile)-lysidine synthase (582 aa).

46 to 51 (SGGADS) provides a ligand contact to ATP. In terms of domain architecture, CMP/dCMP-type deaminase spans 402 to 525 (DPLHAAMGEA…DLLADHWGWR (124 aa)). Residues 548–582 (VRRRSADTPQTPNAETPAPRSSRSTSASGKPTMLE) form a disordered region. Positions 563–575 (TPAPRSSRSTSAS) are enriched in low complexity.

Belongs to the tRNA(Ile)-lysidine synthase family.

The protein resides in the cytoplasm. The enzyme catalyses cytidine(34) in tRNA(Ile2) + L-lysine + ATP = lysidine(34) in tRNA(Ile2) + AMP + diphosphate + H(+). In terms of biological role, ligates lysine onto the cytidine present at position 34 of the AUA codon-specific tRNA(Ile) that contains the anticodon CAU, in an ATP-dependent manner. Cytidine is converted to lysidine, thus changing the amino acid specificity of the tRNA from methionine to isoleucine. In Deinococcus radiodurans (strain ATCC 13939 / DSM 20539 / JCM 16871 / CCUG 27074 / LMG 4051 / NBRC 15346 / NCIMB 9279 / VKM B-1422 / R1), this protein is tRNA(Ile)-lysidine synthase.